The sequence spans 583 residues: 15-cis-phytoene desaturase, chloroplastic/chromoplastic (583 aa).

The transit peptide at 1 to 111 (MPQIGLVSAV…FRASPRPTKP (111 aa)) directs the protein to the chloroplast and chromoplast. FAD is bound by residues 118–134 (GAGLGGLSTAKYLADAG), 141–142 (EA), lysine 149, 166–167 (HI), and tyrosine 172. Arginine 307 is a binding site for substrate. FAD contacts are provided by isoleucine 349 and aspartate 538. Alanine 546 provides a ligand contact to substrate. Methionine 548 serves as a coordination point for FAD.

This sequence belongs to the carotenoid/retinoid oxidoreductase family. As to quaternary structure, homotetramer. It depends on FAD as a cofactor.

It localises to the plastid. The protein resides in the chloroplast. The protein localises to the chromoplast. Its subcellular location is the membrane. It carries out the reaction 2 a plastoquinone + 15-cis-phytoene = 9,9',15-tri-cis-zeta-carotene + 2 a plastoquinol. Its pathway is carotenoid biosynthesis; lycopene biosynthesis. Its function is as follows. Converts phytoene into zeta-carotene via the intermediary of phytofluene by the symmetrical introduction of two double bonds at the C-11 and C-11' positions of phytoene with a concomitant isomerization of two neighboring double bonds at the C9 and C9' positions from trans to cis. In Solanum lycopersicum (Tomato), this protein is 15-cis-phytoene desaturase, chloroplastic/chromoplastic (PDS).